Reading from the N-terminus, the 347-residue chain is MVGGGWKRRPGAGAGPQCEKTVDVKKSKFCEADVSSDLRKEVENHYTLSLPEDFYHFWKFCEELDSEKPADPLSASLGLQLVDPYNILAGKHKMKKKSTVPNFNLHWRFYYDPPEFQTIIIRDKLSATWGISDRDSPDELPVYVGINEAKKNCIIVPNGDNVFAAVKLYLMKKLKEVTDKKKTNLFKNVDEKLTETARELGYSLEQRTMKMKQRDKKVVTKTFHGTGLVPPVDKNVVGYRELPETDADLKRICKTIVEAASDDERRKAFAPIQEMMTFVQFANDECDYGMGLELGMDLFCYGSHYFHKVAGQLLPLAYNLLKRNLFAEIMKDHLANRRKENIDQFAA.

The residue at position 1 (M1) is an N-acetylmethionine. K187 and K234 each carry N6-acetyllysine.

This sequence belongs to the HPF1 family.

The polypeptide is Putative histone PARylation factor 1-like (Homo sapiens (Human)).